The primary structure comprises 244 residues: tRNA (guanine-N(7)-)-methyltransferase (244 aa).

The segment covering 1–10 (MSDTPQSPAQ) has biased composition (polar residues). Residues 1–20 (MSDTPQSPAQGSLAEHDEAR) form a disordered region. S-adenosyl-L-methionine is bound by residues E74, E99, D126, and D149. D149 is a catalytic residue. Substrate is bound by residues K153, D185, and 222-225 (TKFE).

This sequence belongs to the class I-like SAM-binding methyltransferase superfamily. TrmB family.

It carries out the reaction guanosine(46) in tRNA + S-adenosyl-L-methionine = N(7)-methylguanosine(46) in tRNA + S-adenosyl-L-homocysteine. The protein operates within tRNA modification; N(7)-methylguanine-tRNA biosynthesis. In terms of biological role, catalyzes the formation of N(7)-methylguanine at position 46 (m7G46) in tRNA. The chain is tRNA (guanine-N(7)-)-methyltransferase from Pseudomonas aeruginosa (strain UCBPP-PA14).